A 240-amino-acid polypeptide reads, in one-letter code: Uridylate kinase (240 aa).

13–16 (KLSG) is a binding site for ATP. The tract at residues 21–26 (GDKGFG) is involved in allosteric activation by GTP. Gly-55 contributes to the UMP binding site. Positions 56 and 60 each coordinate ATP. Residues Asp-75 and 136–143 (IGNPYFST) contribute to the UMP site. 3 residues coordinate ATP: Asn-164, Tyr-170, and Asp-173.

It belongs to the UMP kinase family. As to quaternary structure, homohexamer.

The protein resides in the cytoplasm. The catalysed reaction is UMP + ATP = UDP + ADP. It functions in the pathway pyrimidine metabolism; CTP biosynthesis via de novo pathway; UDP from UMP (UMPK route): step 1/1. With respect to regulation, allosterically activated by GTP. Inhibited by UTP. In terms of biological role, catalyzes the reversible phosphorylation of UMP to UDP. This chain is Uridylate kinase, found in Staphylococcus haemolyticus (strain JCSC1435).